The chain runs to 427 residues: Peptidase B (427 aa).

Positions 195 and 200 each coordinate Mn(2+). K207 is an active-site residue. Residues D218, D277, and E279 each coordinate Mn(2+). R281 is an active-site residue.

It belongs to the peptidase M17 family. In terms of assembly, homohexamer. Requires Mn(2+) as cofactor.

It is found in the cytoplasm. It carries out the reaction Release of an N-terminal amino acid, Xaa, from a peptide or arylamide. Xaa is preferably Glu or Asp but may be other amino acids, including Leu, Met, His, Cys and Gln.. Functionally, probably plays an important role in intracellular peptide degradation. The chain is Peptidase B from Escherichia fergusonii (strain ATCC 35469 / DSM 13698 / CCUG 18766 / IAM 14443 / JCM 21226 / LMG 7866 / NBRC 102419 / NCTC 12128 / CDC 0568-73).